Here is a 414-residue protein sequence, read N- to C-terminus: Ribulose bisphosphate carboxylase large chain (414 aa).

Positions 100 and 150 each coordinate substrate. The active-site Proton acceptor is K152. Residue K154 participates in substrate binding. Mg(2+) is bound by residues K178, D180, and E181. An N6-carboxylysine modification is found at K178. The active-site Proton acceptor is the H271. 3 residues coordinate substrate: R272, H304, and S356.

Belongs to the RuBisCO large chain family. Type I subfamily. As to quaternary structure, heterohexadecamer of 8 large chains and 8 small chains; disulfide-linked. The disulfide link is formed within the large subunit homodimers. It depends on Mg(2+) as a cofactor. In terms of processing, the disulfide bond which can form in the large chain dimeric partners within the hexadecamer appears to be associated with oxidative stress and protein turnover.

It localises to the plastid. Its subcellular location is the chloroplast. It catalyses the reaction 2 (2R)-3-phosphoglycerate + 2 H(+) = D-ribulose 1,5-bisphosphate + CO2 + H2O. The enzyme catalyses D-ribulose 1,5-bisphosphate + O2 = 2-phosphoglycolate + (2R)-3-phosphoglycerate + 2 H(+). In terms of biological role, ruBisCO catalyzes two reactions: the carboxylation of D-ribulose 1,5-bisphosphate, the primary event in carbon dioxide fixation, as well as the oxidative fragmentation of the pentose substrate in the photorespiration process. Both reactions occur simultaneously and in competition at the same active site. This chain is Ribulose bisphosphate carboxylase large chain (rbcL), found in Blechnopsis orientalis (Fish fern).